Here is a 749-residue protein sequence, read N- to C-terminus: Protein Niban 2 (749 aa).

Gly2 is lipidated: N-myristoyl glycine. A PH domain is found at 68–192 (RIIFSGNLFQ…WQAVLQDCVR (125 aa)). Residues Ser568, Ser574, Ser607, Ser628, Ser647, Ser650, Ser669, Ser674, Ser685, Ser695, and Ser699 each carry the phosphoserine modification. The interval 589–749 (WGEQYGDSGD…EDSAGVQTEF (161 aa)) is disordered. Residues 710 to 719 (VDLEPPKPSD) show a composition bias toward basic and acidic residues. Positions 723-749 (GEQVSSPGSRPPIHTTTEDSAGVQTEF) are enriched in polar residues.

Belongs to the Niban family. Post-translationally, as apoptosis proceeds, degraded via an proteasome-independent pathway, probably by caspases.

The protein resides in the cytoplasm. It localises to the cytosol. It is found in the cell junction. Its subcellular location is the adherens junction. The protein localises to the membrane. May play a role in apoptosis suppression. In Mus musculus (Mouse), this protein is Protein Niban 2.